The primary structure comprises 50 residues: Photosystem I reaction center subunit IX (50 aa).

The helical transmembrane segment at 7–27 threads the bilayer; it reads YLSTAPVLAILCCSFLAGLVI.

The protein belongs to the PsaJ family.

Its subcellular location is the plastid. It localises to the chloroplast thylakoid membrane. Its function is as follows. May help in the organization of the PsaE and PsaF subunits. The chain is Photosystem I reaction center subunit IX from Pinus koraiensis (Korean pine).